We begin with the raw amino-acid sequence, 239 residues long: Orotidine 5'-phosphate decarboxylase (239 aa).

Substrate is bound by residues D15, K37, 64 to 73 (DLKFHDIPNT), T126, R187, Q196, G216, and R217. K66 serves as the catalytic Proton donor.

This sequence belongs to the OMP decarboxylase family. Type 1 subfamily. Homodimer.

The catalysed reaction is orotidine 5'-phosphate + H(+) = UMP + CO2. Its pathway is pyrimidine metabolism; UMP biosynthesis via de novo pathway; UMP from orotate: step 2/2. Functionally, catalyzes the decarboxylation of orotidine 5'-monophosphate (OMP) to uridine 5'-monophosphate (UMP). In Geobacter sulfurreducens (strain ATCC 51573 / DSM 12127 / PCA), this protein is Orotidine 5'-phosphate decarboxylase.